A 712-amino-acid chain; its full sequence is TIR domain-containing adapter molecule 1 (712 aa).

Residues 1-153 (MACTGPSLPS…CGWDIAGDPG (153 aa)) form a TRIF-NTD region. The TRAF6-binding motif lies at 84–91 (EDPEEPPD). The pLxIS motif motif lies at 207 to 210 (LEIS). The residue at position 210 (serine 210) is a Phosphoserine; by TBK1. Disordered regions lie at residues 216-316 (PFLS…SLPL) and 336-384 (LSVE…LFPS). Lysine 229 is covalently cross-linked (Glycyl lysine isopeptide (Lys-Gly) (interchain with G-Cter in ubiquitin)). The TRAF6-binding signature appears at 248-255 (QEPEEMSW). A compositionally biased stretch (pro residues) spans 265–275 (PELPSSPPPGL). A TRAF6-binding motif is present at residues 299–309 (NYPVECTEGSA). Residues 347-369 (KPCPPTPTTPETSPPPPPPPPSS) show a composition bias toward pro residues. Residues 393–553 (KFYNFVILHA…QDTRALREQS (161 aa)) enclose the TIR domain. Residues 512-712 (RLDEHSQIFA…APEDKTQEAE (201 aa)) are sufficient to induce apoptosis. 2 stretches are compositionally biased toward pro residues: residues 620–633 (PFPT…PPPL) and 640–649 (TPPPPSPQPA). A disordered region spans residues 620–677 (PFPTWPGCPQPPPLHAWQAGTPPPPSPQPAAFPQSLPFPQSPAFPTASPAPPQSPGLQ). The segment covering 650 to 666 (AFPQSLPFPQSPAFPTA) has biased composition (low complexity).

Homodimer. Found in a multi-helicase-TICAM1 complex at least composed of DHX36, DDX1, DDX21 and TICAM1; this complex exists in resting cells with or without poly(I:C) RNA ligand stimulation. Interacts (via TIR domain) with DDX21 (via C-terminus). Interacts (via TIR domain) with DHX36 (via C-terminus). Interacts with AZI2 and IRF7. Interacts with TICAM2 in TLR4 recruitment. Interaction with PIAS4 inhibits the TICAM1-induced NF-kappa-B, IRF and IFNB1 activation. Interacts with IKBKB and IKBKE. Interaction with SARM1 blocks TICAM1-dependent transcription factor activation. Interacts with TRAF3. Interacts (when phosphorylated) with IRF3; following activation and phosphorylation on the pLxIS motif by TBK1, recruits IRF3. Interacts with TBK1, TRAF6 and RIPK1 and these interactions are enhanced in the presence of WDFY1. Interacts with TRAFD1. Interacts with UBQLN1 (via UBA domain). Interacts with TLR4. Interacts with WDFY1 in response to poly(I:C). Interacts (via the TIR domain) with TLR3 in response to poly(I:C) and this interaction is enhanced in the presence of WDFY1. Interacts with TRIM56. Component of a multi-helicase-TICAM1 complex that acts as a cytoplasmic sensor of viral double-stranded RNA (dsRNA) and plays a role in the activation of a cascade of antiviral responses including the induction of pro-inflammatory cytokines. Interacts (via the TIR domain) with TLR5. Interacts with TRIM8. Interacts with TAX1BP1 and TRIM32; these interactions target TICAM1 to TAX1BP1-mediated selective autophagic degradation. Interacts with DDX50. In terms of assembly, (Microbial infection) Interacts with hepatitis C virus (HCV) NS3/4A protease; this interaction leads to TICAM1 cleavage, thereby disrupting TLR3 signaling and preventing the establishment of an antiviral state. As to quaternary structure, (Microbial infection) Interacts with Seneca Valley virus protease 3C; this interaction allows the cleavage of TICAM1/TRIF and subsequent suppression of host innate immunity. (Microbial infection) Interacts (via C-terminus) with coxsackievirus B3 (CVB3) protease 3C. Phosphorylated by TBK1. Following activation, phosphorylated by TBK1 at Ser-210 in the pLxIS motif. The phosphorylated pLxIS motif constitutes an IRF3-binding motif, leading to recruitment of the transcription factor IRF3 to induce type-I interferons and other cytokines. In terms of processing, polyubiquitinated at Lys-229 by TRIM38 with 'Lys-48'-linked chains, leading to proteasomal degradation. Polyubiquitinated with 'Lys-6'- and 'Lys-33'-linked chains in a TRIM8-dependent manner; ubiquitination disrupts the interaction with TBK1 and subsequent interferon production. Post-translationally, (Microbial infection) Cleaved and degraded by hepatitis A virus (HAV) protein 3CD allowing the virus to disrupt host TLR3 signaling. (Microbial infection) Cleaved by CVB3 protease 3C allowing the virus to disrupt host TLR3 signaling. In terms of processing, (Microbial infection) Cleaved by Seneca Valley virus protease 3C allowing the virus to disrupt host TLR3 signaling. Post-translationally, (Microbial infection) Cleaved by protease 3C of human enterovirus D68 (EV68) allowing the virus to disrupt host TLR3 signaling. (Microbial infection) Cleaved by HCV protease NS3/4A, thereby disrupting TLR3 signaling and preventing the establishment of an antiviral state. In terms of tissue distribution, ubiquitously expressed but with higher levels in liver.

The protein resides in the cytoplasmic vesicle. It localises to the autophagosome. The protein localises to the cytoplasm. It is found in the cytosol. Its subcellular location is the mitochondrion. Functionally, involved in innate immunity against invading pathogens. Adapter used by TLR3, TLR4 (through TICAM2) and TLR5 to mediate NF-kappa-B and interferon-regulatory factor (IRF) activation, and to induce apoptosis. Ligand binding to these receptors results in TRIF recruitment through its TIR domain. Distinct protein-interaction motifs allow recruitment of the effector proteins TBK1, TRAF6 and RIPK1, which in turn, lead to the activation of transcription factors IRF3 and IRF7, NF-kappa-B and FADD respectively. Phosphorylation by TBK1 on the pLxIS motif leads to recruitment and subsequent activation of the transcription factor IRF3 to induce expression of type I interferon and exert a potent immunity against invading pathogens. Component of a multi-helicase-TICAM1 complex that acts as a cytoplasmic sensor of viral double-stranded RNA (dsRNA) and plays a role in the activation of a cascade of antiviral responses including the induction of pro-inflammatory cytokines. This is TIR domain-containing adapter molecule 1 (TICAM1) from Homo sapiens (Human).